Consider the following 887-residue polypeptide: Alanine--tRNA ligase (887 aa).

A compositionally biased stretch (basic and acidic residues) spans 425-441 (MQEQKSRARSDRREKQQ). Positions 425–448 (MQEQKSRARSDRREKQQTGDGAGS) are disordered. Zn(2+) contacts are provided by histidine 569, histidine 573, cysteine 672, and histidine 676.

Belongs to the class-II aminoacyl-tRNA synthetase family. Zn(2+) serves as cofactor.

The protein localises to the cytoplasm. The catalysed reaction is tRNA(Ala) + L-alanine + ATP = L-alanyl-tRNA(Ala) + AMP + diphosphate. Catalyzes the attachment of alanine to tRNA(Ala) in a two-step reaction: alanine is first activated by ATP to form Ala-AMP and then transferred to the acceptor end of tRNA(Ala). Also edits incorrectly charged Ser-tRNA(Ala) and Gly-tRNA(Ala) via its editing domain. The sequence is that of Alanine--tRNA ligase from Chlorobium luteolum (strain DSM 273 / BCRC 81028 / 2530) (Pelodictyon luteolum).